Reading from the N-terminus, the 432-residue chain is Glutamate-gated chloride channel subunit beta (432 aa).

A signal peptide spans methionine 1–serine 18. The Extracellular portion of the chain corresponds to serine 19–serine 249. An N-linked (GlcNAc...) asparagine glycan is attached at asparagine 52. L-glutamate contacts are provided by arginine 69, arginine 88, and serine 155. A disulfide bridge links cysteine 164 with cysteine 178. Serine 184 is an L-glutamate binding site. Asparagine 219 is a glycosylation site (N-linked (GlcNAc...) asparagine). Cysteine 226 and cysteine 237 form a disulfide bridge. Residues tyrosine 250 to isoleucine 272 traverse the membrane as a helical segment. The Cytoplasmic segment spans residues aspartate 273–threonine 277. A helical transmembrane segment spans residues alanine 278 to asparagine 299. Residues alanine 300 to serine 306 lie on the Extracellular side of the membrane. The helical transmembrane segment at tyrosine 307–leucine 327 threads the bilayer. Residues glutamate 328–aspartate 402 are Cytoplasmic-facing. A helical membrane pass occupies residues tyrosine 403–valine 426. Residues methionine 427–valine 432 lie on the Extracellular side of the membrane.

Belongs to the ligand-gated ion channel (TC 1.A.9) family. Glutamate-gated chloride channel (TC 1.A.9.4) subfamily. In terms of assembly, pentamer. Expressed in motor neuron commissures at the anterior portion of the worms.

It is found in the postsynaptic cell membrane. It localises to the cell membrane. Its function is as follows. Glutamate-gated chloride channel subunit; channel properties may be modulated by the formation of heteromeric channels. Glutamate binding triggers a rapidly reversible current, while the anti-helmintic drug ivermectin triggers a permanently open channel configuration. The protein is Glutamate-gated chloride channel subunit beta of Haemonchus contortus (Barber pole worm).